A 263-amino-acid polypeptide reads, in one-letter code: MPEGPEIRRAADNLEAAIKGKPLTDVWFAFPQLKSYQSRLIGQHVTHVETRGKALLTHFSNDLTLYSHNQLYGVWRVVDTGEEPQTTRVLRVKLQTADKTILLYSASDIEMLTPEQLTTHPFLQRVGHDVLDPNLTPEVVKERLLSPRFRNRQFAGLLLDQAFLAGLGNYLRVEILWQVGLTGNHKAKDLNAAQLDALAHALLDIPRLSYATRGQVDENKYHGALFRFKVFHRDGEPCERCGGIIEKTTLSSRPFYWCPGCQH.

The Schiff-base intermediate with DNA role is filled by Pro-2. Glu-3 serves as the catalytic Proton donor. Residue Lys-53 is the Proton donor; for beta-elimination activity of the active site. Residues Gln-70, Arg-125, and Asn-169 each coordinate DNA. The FPG-type zinc-finger motif lies at 229 to 263 (KVFHRDGEPCERCGGIIEKTTLSSRPFYWCPGCQH). Arg-253 (proton donor; for delta-elimination activity) is an active-site residue.

This sequence belongs to the FPG family. It depends on Zn(2+) as a cofactor.

The catalysed reaction is 2'-deoxyribonucleotide-(2'-deoxyribose 5'-phosphate)-2'-deoxyribonucleotide-DNA = a 3'-end 2'-deoxyribonucleotide-(2,3-dehydro-2,3-deoxyribose 5'-phosphate)-DNA + a 5'-end 5'-phospho-2'-deoxyribonucleoside-DNA + H(+). In terms of biological role, involved in base excision repair of DNA damaged by oxidation or by mutagenic agents. Acts as a DNA glycosylase that recognizes and removes damaged bases. Has a preference for oxidized pyrimidines, such as thymine glycol, 5,6-dihydrouracil and 5,6-dihydrothymine. Has AP (apurinic/apyrimidinic) lyase activity and introduces nicks in the DNA strand. Cleaves the DNA backbone by beta-delta elimination to generate a single-strand break at the site of the removed base with both 3'- and 5'-phosphates. This Escherichia coli O127:H6 (strain E2348/69 / EPEC) protein is Endonuclease 8.